A 161-amino-acid chain; its full sequence is Phosphopantetheine adenylyltransferase (161 aa).

Thr-10 serves as a coordination point for substrate. ATP is bound by residues 10 to 11 (TF) and His-18. Residues Lys-42, Met-74, and Arg-88 each contribute to the substrate site. Residues 89–91 (GLR), Glu-99, and 124–130 (WSFISSS) contribute to the ATP site.

The protein belongs to the bacterial CoaD family. In terms of assembly, homohexamer. Mg(2+) serves as cofactor.

Its subcellular location is the cytoplasm. The catalysed reaction is (R)-4'-phosphopantetheine + ATP + H(+) = 3'-dephospho-CoA + diphosphate. The protein operates within cofactor biosynthesis; coenzyme A biosynthesis; CoA from (R)-pantothenate: step 4/5. Its function is as follows. Reversibly transfers an adenylyl group from ATP to 4'-phosphopantetheine, yielding dephospho-CoA (dPCoA) and pyrophosphate. The protein is Phosphopantetheine adenylyltransferase of Edwardsiella ictaluri (strain 93-146).